A 122-amino-acid chain; its full sequence is Large ribosomal subunit protein uL14 (122 aa).

Belongs to the universal ribosomal protein uL14 family. Part of the 50S ribosomal subunit. Forms a cluster with proteins L3 and L19. In the 70S ribosome, L14 and L19 interact and together make contacts with the 16S rRNA in bridges B5 and B8.

In terms of biological role, binds to 23S rRNA. Forms part of two intersubunit bridges in the 70S ribosome. The chain is Large ribosomal subunit protein uL14 from Anaeromyxobacter sp. (strain Fw109-5).